Reading from the N-terminus, the 296-residue chain is Chronophin (296 aa).

D25 serves as the catalytic Nucleophile. 2 residues coordinate Mg(2+): D25 and D27. D27 acts as the Proton donor in catalysis. Substrate is bound by residues 58–60, H182, and K213; that span reads SNN. A Mg(2+)-binding site is contributed by D238.

Belongs to the HAD-like hydrolase superfamily. Homodimer. Mg(2+) serves as cofactor. As to expression, ubiquitously expressed (at protein level). Highly expressed in all the regions of central nerve system except the spinal cord. Also expressed at high level in liver and testis. In fetus, it is weakly expressed in all organs except brain.

It is found in the cytoplasm. It localises to the cytosol. The protein localises to the cytoskeleton. Its subcellular location is the cell projection. The protein resides in the ruffle membrane. It is found in the lamellipodium membrane. It localises to the cell membrane. The catalysed reaction is pyridoxal 5'-phosphate + H2O = pyridoxal + phosphate. It catalyses the reaction pyridoxine 5'-phosphate + H2O = pyridoxine + phosphate. It carries out the reaction pyridoxamine + phosphate = pyridoxamine 5'-phosphate + H2O. The enzyme catalyses O-phospho-L-seryl-[protein] + H2O = L-seryl-[protein] + phosphate. With respect to regulation, inhibited by NaF, Zn(2+), Ca(2+), Mn(2+) and EDTA. Its function is as follows. Functions as a pyridoxal phosphate (PLP) phosphatase, which also catalyzes the dephosphorylation of pyridoxine 5'-phosphate (PNP) and pyridoxamine 5'-phosphate (PMP), with order of substrate preference PLP &gt; PNP &gt; PMP and therefore plays a role in vitamin B6 metabolism. Also functions as a protein serine phosphatase that specifically dephosphorylates 'Ser-3' in proteins of the actin-depolymerizing factor (ADF)/cofilin family like CFL1 and DSTN. Thereby, regulates cofilin-dependent actin cytoskeleton reorganization, being required for normal progress through mitosis and normal cytokinesis. Does not dephosphorylate phosphothreonines in LIMK1. Does not dephosphorylate peptides containing phosphotyrosine. The protein is Chronophin of Homo sapiens (Human).